Reading from the N-terminus, the 378-residue chain is Queuine tRNA-ribosyltransferase (378 aa).

Asp89 (proton acceptor) is an active-site residue. Substrate-binding positions include 89-93, Asp143, Gln194, and Gly221; that span reads DSGGF. Residues 252-258 form an RNA binding region; that stretch reads GVGTPAN. The Nucleophile role is filled by Asp271. Positions 309, 311, 314, and 340 each coordinate Zn(2+).

Belongs to the queuine tRNA-ribosyltransferase family. In terms of assembly, homodimer. Within each dimer, one monomer is responsible for RNA recognition and catalysis, while the other monomer binds to the replacement base PreQ1. Zn(2+) serves as cofactor.

It catalyses the reaction 7-aminomethyl-7-carbaguanine + guanosine(34) in tRNA = 7-aminomethyl-7-carbaguanosine(34) in tRNA + guanine. Its pathway is tRNA modification; tRNA-queuosine biosynthesis. Its function is as follows. Catalyzes the base-exchange of a guanine (G) residue with the queuine precursor 7-aminomethyl-7-deazaguanine (PreQ1) at position 34 (anticodon wobble position) in tRNAs with GU(N) anticodons (tRNA-Asp, -Asn, -His and -Tyr). Catalysis occurs through a double-displacement mechanism. The nucleophile active site attacks the C1' of nucleotide 34 to detach the guanine base from the RNA, forming a covalent enzyme-RNA intermediate. The proton acceptor active site deprotonates the incoming PreQ1, allowing a nucleophilic attack on the C1' of the ribose to form the product. After dissociation, two additional enzymatic reactions on the tRNA convert PreQ1 to queuine (Q), resulting in the hypermodified nucleoside queuosine (7-(((4,5-cis-dihydroxy-2-cyclopenten-1-yl)amino)methyl)-7-deazaguanosine). This is Queuine tRNA-ribosyltransferase from Lachnospira eligens (strain ATCC 27750 / DSM 3376 / VPI C15-48 / C15-B4) (Eubacterium eligens).